We begin with the raw amino-acid sequence, 492 residues long: GTPase Der (492 aa).

The EngA-type G 1 domain maps to 3 to 166; that stretch reads PVIALVGRPN…AVLGIFPKDA (164 aa). Residues 9–16, 56–60, and 118–121 contribute to the GTP site; these read GRPNVGKS, DTGGI, and NKVD. The tract at residues 166–190 is disordered; sequence AGEPEEGAEAEEEVQEGQEAKRIPG. Positions 168–181 are enriched in acidic residues; sequence EPEEGAEAEEEVQE. The EngA-type G 2 domain occupies 197-370; that stretch reads IKLAIIGRPN…SVQAAFHSAV (174 aa). GTP-binding positions include 203 to 210, 250 to 254, and 315 to 318; these read GRPNVGKS, DTAGV, and NKWD. Residues 371 to 455 enclose the KH-like domain; the sequence is TRWPTSRLTQ…PIRIEYKGGE (85 aa). Residues 453-492 are disordered; that stretch reads GGENPYEGNKNKLTDRQVNKKRRLMSHHKKAEKKRKDKRK. The segment covering 461 to 470 has biased composition (basic and acidic residues); that stretch reads NKNKLTDRQV. Residues 471–492 show a composition bias toward basic residues; sequence NKKRRLMSHHKKAEKKRKDKRK.

This sequence belongs to the TRAFAC class TrmE-Era-EngA-EngB-Septin-like GTPase superfamily. EngA (Der) GTPase family. Associates with the 50S ribosomal subunit.

In terms of biological role, GTPase that plays an essential role in the late steps of ribosome biogenesis. This Ectopseudomonas mendocina (strain ymp) (Pseudomonas mendocina) protein is GTPase Der.